The following is a 70-amino-acid chain: Conotoxin ArMKLT2-0111 (70 aa).

The N-terminal stretch at 1–22 (MKLTCVLIIAVLFLTACQLTTG) is a signal peptide. The propeptide occupies 23–40 (EQKDHALRSTDKNSKLTR). A Pyrrolidone carboxylic acid modification is found at Gln-41. 3 disulfides stabilise this stretch: Cys-42/Cys-56, Cys-49/Cys-60, and Cys-55/Cys-67.

This sequence belongs to the conotoxin O1 superfamily. In terms of tissue distribution, expressed by the venom duct.

The protein localises to the secreted. In Conus arenatus (Sand-dusted cone), this protein is Conotoxin ArMKLT2-0111.